The primary structure comprises 50 residues: ISSQHLCGSHLVEALNLVCGDRGFFYNPRGIVEQCCHRPCSMFELENYCN.

3 disulfide bridges follow: Cys7-Cys36, Cys19-Cys49, and Cys35-Cys40.

The protein belongs to the insulin family. As to quaternary structure, heterodimer of a B chain and an A chain linked by two disulfide bonds.

The protein resides in the secreted. Its function is as follows. Insulin decreases blood glucose concentration. It increases cell permeability to monosaccharides, amino acids and fatty acids. It accelerates glycolysis, the pentose phosphate cycle, and glycogen synthesis in liver. This chain is Insulin-1, found in Thunnus orientalis (North Pacific bluefin tuna).